The chain runs to 62 residues: uncharacterized protein (62 aa).

The segment at 1–62 (MSSTAEEMAA…SNGEAKRKEK (62 aa)) is disordered. Over residues 28 to 37 (TKSDRVEHKH) the composition is skewed to basic and acidic residues.

This is an uncharacterized protein from Caenorhabditis elegans.